The following is a 945-amino-acid chain: Isoleucine--tRNA ligase (945 aa).

A 'HIGH' region motif is present at residues 66-76 (PYANGDIHLGH). Glu581 contributes to the L-isoleucyl-5'-AMP binding site. The 'KMSKS' region motif lies at 622–626 (KMSKS). Lys625 contributes to the ATP binding site. 4 residues coordinate Zn(2+): Cys908, Cys911, Cys928, and Cys931.

The protein belongs to the class-I aminoacyl-tRNA synthetase family. IleS type 1 subfamily. In terms of assembly, monomer. The cofactor is Zn(2+).

It localises to the cytoplasm. The enzyme catalyses tRNA(Ile) + L-isoleucine + ATP = L-isoleucyl-tRNA(Ile) + AMP + diphosphate. In terms of biological role, catalyzes the attachment of isoleucine to tRNA(Ile). As IleRS can inadvertently accommodate and process structurally similar amino acids such as valine, to avoid such errors it has two additional distinct tRNA(Ile)-dependent editing activities. One activity is designated as 'pretransfer' editing and involves the hydrolysis of activated Val-AMP. The other activity is designated 'posttransfer' editing and involves deacylation of mischarged Val-tRNA(Ile). The chain is Isoleucine--tRNA ligase from Paraburkholderia xenovorans (strain LB400).